Here is a 351-residue protein sequence, read N- to C-terminus: CCN family member 3 (351 aa).

Positions 1–24 are cleaved as a signal peptide; that stretch reads METGGGQGLPVLLLLLLLLRPCEV. Residues 27–101 form the IGFBP N-terminal domain; that stretch reads REAACPRPCG…GGGAGICMVL (75 aa). 6 disulfide bridges follow: C31–C57, C35–C59, C39–C60, C46–C63, C71–C85, and C77–C98. Residues 104 to 170 enclose the VWFC domain; sequence DNCVFDGMIY…GECCEKWVCD (67 aa). The 46-residue stretch at 201–246 folds into the TSP type-1 domain; the sequence is NCIEQTTEWSACSKSCGMGFSTRVTNRNQQCEMVKQTRLCMMRPCE. Intrachain disulfides connect C258–C295, C275–C309, C286–C325, C289–C327, and C294–C331. The 75-residue stretch at 258–332 folds into the CTCK domain; it reads CIQTKKSMKA…NTCVCHGNCP (75 aa). N-linked (GlcNAc...) asparagine glycosylation occurs at N274.

This sequence belongs to the CCN family. In terms of tissue distribution, brain and heart, and at a lower level in muscle and intestine, in the embryo. Lung and less so in brain and spleen, in adult chicken.

It is found in the secreted. Its subcellular location is the cytoplasm. It localises to the cell junction. The protein localises to the gap junction. Immediate-early protein likely to play a role in cell growth regulation. Its overexpression is associated with tumorigenesis and expression of a N-terminal-truncated version of CCN3 gene in chicken embryonic fibroblasts (CEF) is sufficient to induce the transformation of CEF in vitro. The sequence is that of CCN family member 3 (CCN3) from Gallus gallus (Chicken).